We begin with the raw amino-acid sequence, 447 residues long: Alkylglycerol monooxygenase (447 aa).

2 helical membrane-spanning segments follow: residues 43 to 63 and 111 to 131; these read ATPF…ILKG and WDSP…YYWF. A Fatty acid hydroxylase domain is found at 118-249; sequence YLTFLGVDFG…LIIWDRIFGT (132 aa). Residues 132–136 carry the Histidine box-1 motif; sequence HRMAH. A Histidine box-2 motif is present at residues 145 to 149; it reads HQAHH. The helical transmembrane segment at 170–190 threads the bilayer; the sequence is SWVFYCPLALFVPPSVFAVHI. Residues 221-225 carry the Histidine box-3 motif; sequence HRVHH. The next 3 helical transmembrane spans lie at 334 to 354, 363 to 383, and 413 to 433; these read FLKI…EETF, VTIL…GFLL, and IESL…FWGV.

It belongs to the sterol desaturase family. TMEM195 subfamily. The cofactor is Fe cation.

It localises to the endoplasmic reticulum membrane. It carries out the reaction 1-O-(1,2-saturated-alkyl)-sn-glycerol + (6R)-L-erythro-5,6,7,8-tetrahydrobiopterin + O2 = a 1-(1-hydroxyalkyl)-sn-glycerol + (6R)-L-erythro-6,7-dihydrobiopterin + H2O. In terms of biological role, glyceryl-ether monooxygenase that cleaves the O-alkyl bond of ether lipids. Ether lipids are essential components of brain membranes. The chain is Alkylglycerol monooxygenase (Agmo) from Rattus norvegicus (Rat).